We begin with the raw amino-acid sequence, 328 residues long: Sialic acid-binding Ig-like lectin 15 (328 aa).

Positions 1–19 (MEKSIWLLACLAWVLPTGS) are cleaved as a signal peptide. Residues 20–263 (FVRTKIDTTE…RFHGASGAST (244 aa)) lie on the Extracellular side of the membrane. Positions 40 to 158 (PAQRWSMQVP…DVHDRYESRH (119 aa)) constitute an Ig-like V-type domain. 2 disulfide bridges follow: Cys64–Cys142 and Cys95–Cys104. Arg143 contacts N-acetylneuraminate. An Ig-like C2-type domain is found at 168 to 251 (PRIVNISVLP…SLGRSEASVY (84 aa)). Asn172 carries N-linked (GlcNAc...) asparagine glycosylation. Cysteines 187 and 237 form a disulfide. A helical transmembrane segment spans residues 264-284 (VALLLGALGFKALLLLGVLAA). Topologically, residues 285-328 (RAARRRPEHLDTPDTPPRSQAQESNYENLSQMNPRSPPATMCSP) are cytoplasmic. Residues 289 to 328 (RRPEHLDTPDTPPRSQAQESNYENLSQMNPRSPPATMCSP) form a disordered region. The segment covering 301–318 (PRSQAQESNYENLSQMNP) has biased composition (polar residues).

This sequence belongs to the immunoglobulin superfamily. SIGLEC (sialic acid binding Ig-like lectin) family. In terms of assembly, interacts with TYROBP and HCST. Expressed in macrophage and/or dendritic cells of spleen and lymph nodes.

It is found in the membrane. Binds sialylated glycoproteins. The chain is Sialic acid-binding Ig-like lectin 15 (SIGLEC15) from Homo sapiens (Human).